Reading from the N-terminus, the 238-residue chain is Orotidine 5'-phosphate decarboxylase (238 aa).

Residues Asp18, Lys40, 67–76 (DMKLLDIDNT), Thr122, Arg183, Gln192, and Arg213 contribute to the substrate site. Catalysis depends on Lys69, which acts as the Proton donor.

This sequence belongs to the OMP decarboxylase family. Type 1 subfamily. As to quaternary structure, homodimer.

The enzyme catalyses orotidine 5'-phosphate + H(+) = UMP + CO2. It participates in pyrimidine metabolism; UMP biosynthesis via de novo pathway; UMP from orotate: step 2/2. Its function is as follows. Catalyzes the decarboxylation of orotidine 5'-monophosphate (OMP) to uridine 5'-monophosphate (UMP). In Brucella canis (strain ATCC 23365 / NCTC 10854 / RM-666), this protein is Orotidine 5'-phosphate decarboxylase.